The following is a 300-amino-acid chain: Ferredoxin/F(420)H(2)-dependent CoB-CoM heterodisulfide reductase subunit B (300 aa).

It belongs to the HdrB family. In terms of assembly, the ferredoxin/F(420)H(2)-dependent CoB-CoM heterodisulfide reductase is composed of three subunits; HdrA2, HdrB2 and HdrC2. It depends on [4Fe-4S] cluster as a cofactor.

The protein resides in the cytoplasm. The enzyme catalyses coenzyme B + coenzyme M + 2 oxidized [2Fe-2S]-[ferredoxin] = coenzyme M-coenzyme B heterodisulfide + 2 reduced [2Fe-2S]-[ferredoxin] + 2 H(+). It carries out the reaction coenzyme B + 2 oxidized coenzyme F420-(gamma-L-Glu)(n) + coenzyme M + 2 reduced [2Fe-2S]-[ferredoxin] + 4 H(+) = coenzyme M-coenzyme B heterodisulfide + 2 reduced coenzyme F420-(gamma-L-Glu)(n) + 2 oxidized [2Fe-2S]-[ferredoxin]. Its pathway is cofactor metabolism; coenzyme M-coenzyme B heterodisulfide reduction; coenzyme B and coenzyme M from coenzyme M-coenzyme B heterodisulfide: step 1/1. Its function is as follows. Part of a complex that catalyzes the reversible reduction of CoM-S-S-CoB to the thiol-coenzymes H-S-CoM (coenzyme M) and H-S-CoB (coenzyme B). Catalyzes the transfer of electrons from ferredoxin to CoM-S-S-CoB during methanogenesis from acetate. Electrons transfer from ferredoxin to CoM-S-S-CoB via HdrA2, HdrC2 and HdrB2. In addition, the complex can use electron bifurcation to direct electron pairs from reduced coenzyme F420 towards the reduction of both ferredoxin and CoB-CoM heterodisulfide. This activity may take place during Fe(III)-dependent anaerobic methane oxidation. This is Ferredoxin/F(420)H(2)-dependent CoB-CoM heterodisulfide reductase subunit B from Methanosarcina acetivorans (strain ATCC 35395 / DSM 2834 / JCM 12185 / C2A).